We begin with the raw amino-acid sequence, 450 residues long: Protein phosphatase 1F (450 aa).

Residues 152–409 (LVSIHAIRNT…DNITVMVVFL (258 aa)) form the PPM-type phosphatase domain. The Mn(2+) site is built by aspartate 194, glycine 195, aspartate 356, and aspartate 400. The segment at 420-450 (GQGAGGAQADVGSQDLSTGLSELEINTSQRS) is disordered. The segment covering 433–450 (QDLSTGLSELEINTSQRS) has biased composition (polar residues). Serine 450 carries the phosphoserine modification.

The protein belongs to the PP2C family. In terms of assembly, associates with FEM1B. Mg(2+) serves as cofactor. Requires Mn(2+) as cofactor.

The catalysed reaction is O-phospho-L-seryl-[protein] + H2O = L-seryl-[protein] + phosphate. The enzyme catalyses O-phospho-L-threonyl-[protein] + H2O = L-threonyl-[protein] + phosphate. In terms of biological role, dephosphorylates and concomitantly deactivates CaM-kinase II activated upon autophosphorylation, and CaM-kinases IV and I activated upon phosphorylation by CaM-kinase kinase. Promotes apoptosis. This is Protein phosphatase 1F (Ppm1f) from Rattus norvegicus (Rat).